Here is a 101-residue protein sequence, read N- to C-terminus: NAD(P)H-quinone oxidoreductase subunit 4L, chloroplastic (101 aa).

The next 3 membrane-spanning stretches (helical) occupy residues 2-22, 32-52, and 61-81; these read MLEH…YGLI, MCLE…SDFF, and IFSI…LAIV.

It belongs to the complex I subunit 4L family. In terms of assembly, NDH is composed of at least 16 different subunits, 5 of which are encoded in the nucleus.

The protein resides in the plastid. It is found in the chloroplast thylakoid membrane. It carries out the reaction a plastoquinone + NADH + (n+1) H(+)(in) = a plastoquinol + NAD(+) + n H(+)(out). The enzyme catalyses a plastoquinone + NADPH + (n+1) H(+)(in) = a plastoquinol + NADP(+) + n H(+)(out). Functionally, NDH shuttles electrons from NAD(P)H:plastoquinone, via FMN and iron-sulfur (Fe-S) centers, to quinones in the photosynthetic chain and possibly in a chloroplast respiratory chain. The immediate electron acceptor for the enzyme in this species is believed to be plastoquinone. Couples the redox reaction to proton translocation, and thus conserves the redox energy in a proton gradient. This Panax ginseng (Korean ginseng) protein is NAD(P)H-quinone oxidoreductase subunit 4L, chloroplastic.